A 426-amino-acid chain; its full sequence is 26S proteasome regulatory subunit 7 (426 aa).

209–216 (GPPGTGKT) contributes to the ATP binding site.

Belongs to the AAA ATPase family.

Its subcellular location is the cytoplasm. The protein localises to the nucleus. The 26S proteasome is involved in the ATP-dependent degradation of ubiquitinated proteins. The regulatory (or ATPase) complex confers ATP dependency and substrate specificity to the 26S complex. This chain is 26S proteasome regulatory subunit 7 (RPT1), found in Spinacia oleracea (Spinach).